We begin with the raw amino-acid sequence, 143 residues long: UPF0763 protein HH_0976 (143 aa).

The protein belongs to the UPF0763 family.

This chain is UPF0763 protein HH_0976, found in Helicobacter hepaticus (strain ATCC 51449 / 3B1).